Reading from the N-terminus, the 216-residue chain is Small ribosomal subunit protein uS4 (216 aa).

An S4 RNA-binding domain is found at 111 to 175; that stretch reads RRLQTQVLRL…SPLVSESHPE (65 aa). The tract at residues 194–216 is disordered; it reads VAEAKQAKEKPPERGGRKRRGRR. Residues 198-208 show a composition bias toward basic and acidic residues; the sequence is KQAKEKPPERG.

This sequence belongs to the universal ribosomal protein uS4 family. In terms of assembly, part of the 30S ribosomal subunit. Contacts protein S5. The interaction surface between S4 and S5 is involved in control of translational fidelity.

In terms of biological role, one of the primary rRNA binding proteins, it binds directly to 16S rRNA where it nucleates assembly of the body of the 30S subunit. Functionally, with S5 and S12 plays an important role in translational accuracy. The chain is Small ribosomal subunit protein uS4 from Methanosarcina barkeri (strain Fusaro / DSM 804).